The primary structure comprises 417 residues: NADH-quinone oxidoreductase subunit D (417 aa).

Belongs to the complex I 49 kDa subunit family. As to quaternary structure, NDH-1 is composed of 14 different subunits. Subunits NuoB, C, D, E, F, and G constitute the peripheral sector of the complex.

It is found in the cell inner membrane. It carries out the reaction a quinone + NADH + 5 H(+)(in) = a quinol + NAD(+) + 4 H(+)(out). NDH-1 shuttles electrons from NADH, via FMN and iron-sulfur (Fe-S) centers, to quinones in the respiratory chain. The immediate electron acceptor for the enzyme in this species is believed to be ubiquinone. Couples the redox reaction to proton translocation (for every two electrons transferred, four hydrogen ions are translocated across the cytoplasmic membrane), and thus conserves the redox energy in a proton gradient. This chain is NADH-quinone oxidoreductase subunit D, found in Francisella tularensis subsp. holarctica (strain FTNF002-00 / FTA).